The sequence spans 217 residues: GTP-binding protein Rit2 (217 aa).

Residues 27-34 (GAGGVGKS), 74-78 (DTAGQ), and 133-136 (NKID) each bind GTP.

Belongs to the small GTPase superfamily. Ras family. As to quaternary structure, interacts with AFDN, the C-terminal domain of RALGDS and RLF, but not with RIN1 and PIK3CA. RLF binds exclusively to the active GTP-bound form. Binds calmodulin. Interacts with PLXNB3.

The protein resides in the nucleus. The protein localises to the cell membrane. The enzyme catalyses GTP + H2O = GDP + phosphate + H(+). Its activity is regulated as follows. Alternates between an inactive form bound to GDP and an active form bound to GTP. In terms of biological role, binds and exchanges GTP and GDP. This is GTP-binding protein Rit2 (Rit2) from Rattus norvegicus (Rat).